The primary structure comprises 520 residues: CUGBP Elav-like family member 4 (520 aa).

RRM domains follow at residues 47–128 (IKLF…PADS), 135–215 (RKLF…FADT), and 435–513 (CNLF…LKRP).

The protein belongs to the CELF/BRUNOL family.

The protein resides in the nucleus. Its subcellular location is the cytoplasm. Functionally, RNA-binding protein that may be implicated in the regulation of pre-mRNA alternative splicing. The sequence is that of CUGBP Elav-like family member 4 (celf4) from Danio rerio (Zebrafish).